A 424-amino-acid chain; its full sequence is MIPKYRIRCISGGEIVPDITSLSCPAGHDSLLRTEYTSRRLQLSYHSGIFRYLCWLPVTAPLLPSGGPVTFTSDELSRELGLSRLAISFSGYSPEHHASLTTGSFKELEALATLQRLWELGKKIPVIASAGNTGRAFAGLSAQYGKPVVVVVPSSAVSRLWTTTPAQDVFLVAVDGDYTDAIAVSTALATVPGCVPEGGARNVARRDGMGTTVLDAAVTLGRIPDHYFQAVGSGTGAIAAWEAALRLIGDGRYGTKLPRLHLAQNKPFTPIVLAWQQRRRTFKPELDMPDAPNAIKEVMSPVLTNRSPPYGIGGGLFDALQATEGQMYAVSNDEGKKGMALIRDTLGIDPDPAAAVATAALVQAAAAGTVGPDDSILLNITGGGYERIREDYTLYPIEPSVTVNQHETGDTLKAELSRWVAHYG.

Lysine 106 bears the N6-(pyridoxal phosphate)lysine mark. 2 residues coordinate pyridoxal 5'-phosphate: asparagine 132 and threonine 381.

It belongs to the threonine synthase family. Cysteate synthase subfamily. As to quaternary structure, homotrimer. The cofactor is pyridoxal 5'-phosphate.

The catalysed reaction is O-phospho-L-serine + sulfite + H(+) = L-cysteate + phosphate. The protein operates within cofactor biosynthesis; coenzyme M biosynthesis. Specifically catalyzes the beta-elimination of phosphate from L-phosphoserine and the beta-addition of sulfite to the dehydroalanine intermediate to produce L-cysteate. The polypeptide is Cysteate synthase (Methanoregula boonei (strain DSM 21154 / JCM 14090 / 6A8)).